A 212-amino-acid polypeptide reads, in one-letter code: Thymidine kinase (212 aa).

Residues 11 to 18 (SPMNAGKT), 43 to 45 (DTR), and 86 to 89 (DEAQ) each bind ATP. Catalysis depends on E87, which acts as the Proton acceptor. F119 is a binding site for substrate. 4 residues coordinate Zn(2+): C144, C147, C183, and C186.

Belongs to the thymidine kinase family.

The enzyme catalyses thymidine + ATP = dTMP + ADP + H(+). This is Thymidine kinase (TK) from Encephalitozoon cuniculi (strain GB-M1) (Microsporidian parasite).